The primary structure comprises 434 residues: Serine hydroxymethyltransferase (434 aa).

(6S)-5,6,7,8-tetrahydrofolate contacts are provided by residues leucine 131 and 135 to 137; that span reads GHL. Lysine 240 bears the N6-(pyridoxal phosphate)lysine mark.

Belongs to the SHMT family. In terms of assembly, homodimer. Pyridoxal 5'-phosphate serves as cofactor.

The protein localises to the cytoplasm. It carries out the reaction (6R)-5,10-methylene-5,6,7,8-tetrahydrofolate + glycine + H2O = (6S)-5,6,7,8-tetrahydrofolate + L-serine. Its pathway is one-carbon metabolism; tetrahydrofolate interconversion. It functions in the pathway amino-acid biosynthesis; glycine biosynthesis; glycine from L-serine: step 1/1. In terms of biological role, catalyzes the reversible interconversion of serine and glycine with tetrahydrofolate (THF) serving as the one-carbon carrier. This reaction serves as the major source of one-carbon groups required for the biosynthesis of purines, thymidylate, methionine, and other important biomolecules. Also exhibits THF-independent aldolase activity toward beta-hydroxyamino acids, producing glycine and aldehydes, via a retro-aldol mechanism. The polypeptide is Serine hydroxymethyltransferase (Gluconobacter oxydans (strain 621H) (Gluconobacter suboxydans)).